A 317-amino-acid polypeptide reads, in one-letter code: tRNA-dihydrouridine(16) synthase (317 aa).

Residues 7–9 (PME) and Gln68 contribute to the FMN site. Cys98 acts as the Proton donor in catalysis. FMN-binding positions include Lys139, 199–201 (NGE), and 223–224 (GR).

This sequence belongs to the Dus family. DusC subfamily. Requires FMN as cofactor.

It catalyses the reaction 5,6-dihydrouridine(16) in tRNA + NADP(+) = uridine(16) in tRNA + NADPH + H(+). The catalysed reaction is 5,6-dihydrouridine(16) in tRNA + NAD(+) = uridine(16) in tRNA + NADH + H(+). Functionally, catalyzes the synthesis of 5,6-dihydrouridine (D), a modified base found in the D-loop of most tRNAs, via the reduction of the C5-C6 double bond in target uridines. Specifically modifies U16 in tRNAs. This is tRNA-dihydrouridine(16) synthase from Pseudomonas syringae pv. tomato (strain ATCC BAA-871 / DC3000).